We begin with the raw amino-acid sequence, 188 residues long: Protein GrpE (188 aa).

Residues 1–22 show a composition bias toward low complexity; it reads MEENKQNQNLNTEETTEQQTEA. The segment at 1–26 is disordered; that stretch reads MEENKQNQNLNTEETTEQQTEAETVE.

Belongs to the GrpE family. Homodimer.

The protein resides in the cytoplasm. Participates actively in the response to hyperosmotic and heat shock by preventing the aggregation of stress-denatured proteins, in association with DnaK and GrpE. It is the nucleotide exchange factor for DnaK and may function as a thermosensor. Unfolded proteins bind initially to DnaJ; upon interaction with the DnaJ-bound protein, DnaK hydrolyzes its bound ATP, resulting in the formation of a stable complex. GrpE releases ADP from DnaK; ATP binding to DnaK triggers the release of the substrate protein, thus completing the reaction cycle. Several rounds of ATP-dependent interactions between DnaJ, DnaK and GrpE are required for fully efficient folding. In Exiguobacterium sibiricum (strain DSM 17290 / CCUG 55495 / CIP 109462 / JCM 13490 / 255-15), this protein is Protein GrpE.